The following is a 142-amino-acid chain: Transcription antitermination protein NusB (142 aa).

Belongs to the NusB family.

Involved in transcription antitermination. Required for transcription of ribosomal RNA (rRNA) genes. Binds specifically to the boxA antiterminator sequence of the ribosomal RNA (rrn) operons. In Actinobacillus succinogenes (strain ATCC 55618 / DSM 22257 / CCUG 43843 / 130Z), this protein is Transcription antitermination protein NusB.